The chain runs to 332 residues: Phosphate acetyltransferase (332 aa).

This sequence belongs to the phosphate acetyltransferase and butyryltransferase family.

It is found in the cytoplasm. It catalyses the reaction acetyl-CoA + phosphate = acetyl phosphate + CoA. Its pathway is metabolic intermediate biosynthesis; acetyl-CoA biosynthesis; acetyl-CoA from acetate: step 2/2. This is Phosphate acetyltransferase (pta) from Acetivibrio thermocellus (strain ATCC 27405 / DSM 1237 / JCM 9322 / NBRC 103400 / NCIMB 10682 / NRRL B-4536 / VPI 7372) (Clostridium thermocellum).